The following is a 224-amino-acid chain: UPF0758 protein Sde_3678 (224 aa).

The MPN domain occupies 102-224 (SLTSTTAVKQ…AVSFAERGWI (123 aa)). Zn(2+) is bound by residues His-173, His-175, and Asp-186. A JAMM motif motif is present at residues 173–186 (HNHPSGIAEPSEPD).

It belongs to the UPF0758 family.

The polypeptide is UPF0758 protein Sde_3678 (Saccharophagus degradans (strain 2-40 / ATCC 43961 / DSM 17024)).